The following is a 132-amino-acid chain: Small ribosomal subunit protein uS8 (132 aa).

It belongs to the universal ribosomal protein uS8 family. In terms of assembly, part of the 30S ribosomal subunit. Contacts proteins S5 and S12.

Functionally, one of the primary rRNA binding proteins, it binds directly to 16S rRNA central domain where it helps coordinate assembly of the platform of the 30S subunit. The chain is Small ribosomal subunit protein uS8 from Xylella fastidiosa (strain 9a5c).